We begin with the raw amino-acid sequence, 64 residues long: Arasin 1 (64 aa).

A signal peptide spans 1-25 (MERRTLLVVLLVCSCVVAAAAEASP). Positions 22–43 (EASPSRWPSPGRPRPFPGRPKP) are disordered. Positions 26-48 (SRWPSPGRPRPFPGRPKPIFRPR) are pro/Arg-rich region responsible for antibacterial and antifungal activity. A compositionally biased stretch (pro residues) spans 31 to 43 (PGRPRPFPGRPKP). Residues 49 to 62 (PCNCYAPPCPCDRW) form a cystein-containing C-terminal region important for stability but not essential for antimicrobial activity region. 2 disulfides stabilise this stretch: C50–C59 and C52–C57. Positions 63–64 (RH) are excised as a propeptide.

In terms of assembly, interacts with chitin through the N-terminal region (26-48). This interaction may be important, since chitin is a component of the fungal cell wall, as well as of the crab exoskeleton (permitting a possible action of arasin in wound healing in case of lesions). Disulfide bonds are important for activity especially against Gram-negative bacteria, since the linearization of the peptide causes a strong decrease of activity on these bacteria. In terms of tissue distribution, mainly expressed in hemocytes. No or very low expression in heart, gills, inestines, and epidermis.

Antimicrobial peptide that has a large activity spectrum with activity against Gram-positive, Gram-negative bacteria, as well as against fungi. Shows activity at micromolar concentrations. Displays minimal inhibitory concentration (MIC) values lower than minimal bactericidal concentrations (MBC). Synthetic peptides with similar activities than the full length peptide (composed of the first 23 or 25 amino acids (Arasin 1(26-48) or Arasin 1(26-50))) may have a dual mode of action depending on the peptide concentrations. At MIC concentrations, the peptide penetrates into the cytoplasm of target cells (tested on the Gram-negative E.coli). The two inner membrane proteins YgdD and SbmA may be required for this uptake. At concentrations higher than MIC, arasin may act by disrupting membranes. Full-length and N-terminal peptides do not show hemolytic activity. The protein is Arasin 1 of Hyas araneus (Atlantic lyre crab).